Reading from the N-terminus, the 266-residue chain is Indole-3-glycerol phosphate synthase (266 aa).

Belongs to the TrpC family.

It catalyses the reaction 1-(2-carboxyphenylamino)-1-deoxy-D-ribulose 5-phosphate + H(+) = (1S,2R)-1-C-(indol-3-yl)glycerol 3-phosphate + CO2 + H2O. The protein operates within amino-acid biosynthesis; L-tryptophan biosynthesis; L-tryptophan from chorismate: step 4/5. The protein is Indole-3-glycerol phosphate synthase of Janthinobacterium sp. (strain Marseille) (Minibacterium massiliensis).